A 341-amino-acid polypeptide reads, in one-letter code: Geranylgeranyl pyrophosphate synthase penG (341 aa).

Isopentenyl diphosphate contacts are provided by Lys-68, Arg-71, and His-100. Mg(2+)-binding residues include Asp-107 and Asp-111. Residue Arg-116 participates in dimethylallyl diphosphate binding. Arg-117 is an isopentenyl diphosphate binding site. The dimethylallyl diphosphate site is built by Lys-194, Thr-195, and Gln-228. Asp-231 is a binding site for Mg(2+). Positions 235, 245, and 255 each coordinate dimethylallyl diphosphate.

This sequence belongs to the FPP/GGPP synthase family. Mg(2+) serves as cofactor.

It carries out the reaction isopentenyl diphosphate + dimethylallyl diphosphate = (2E)-geranyl diphosphate + diphosphate. The catalysed reaction is isopentenyl diphosphate + (2E)-geranyl diphosphate = (2E,6E)-farnesyl diphosphate + diphosphate. It catalyses the reaction isopentenyl diphosphate + (2E,6E)-farnesyl diphosphate = (2E,6E,10E)-geranylgeranyl diphosphate + diphosphate. The protein operates within secondary metabolite biosynthesis. In terms of biological role, geranylgeranyl pyrophosphate synthase; part of the gene cluster that mediates the biosynthesis of the indole diterpenes penitrems. The geranylgeranyl diphosphate (GGPP) synthase penG catalyzes the first step in penitrem biosynthesis via conversion of farnesyl pyrophosphate and isopentyl pyrophosphate into geranylgeranyl pyrophosphate (GGPP). Condensation of indole-3-glycerol phosphate with GGPP by the prenyl transferase penC then forms 3-geranylgeranylindole (3-GGI). Epoxidation by the FAD-dependent monooxygenase penM leads to a epoxidized-GGI that is substrate of the terpene cyclase penB for cyclization to yield paspaline. Paspaline is subsequently converted to 13-desoxypaxilline by the cytochrome P450 monooxygenase penP, the latter being then converted to paxilline by the cytochrome P450 monooxygenase penQ. Paxilline is converted to beta-paxitriol via C-10 ketoreduction by the short-chain dehydrogenase PC-15 which can be monoprenylated at the C-20 by the indole diterpene prenyltransferase penD. A two-step elimination (acetylation and elimination) process performed by the O-acetyltransferase PC-16 and the P.simplicissimum ptmI-ortholog not yet identified in P.crustosum, leads to the production of the prenylated form of penijanthine. The FAD-linked oxidoreductase ptmO then converts the prenylated form of penijanthine into PC-M5 which is in turn transformed into PC-M4 by the aromatic dimethylallyltransferase PC-22. A series of oxidation steps involving 4 cytochrome P450 monooxygenases (PC-21, PC-05, PC-23, PC-20) and a FAD-dependent monooxygenase (PC-14) are required for the transformation of PC-M4 to penitrems A and E. Synthesis of these final products is proposed to proceed via penitrems D and C (PC-21, PC-05, PC-14) and penitrems B and F (PC-21, PC-05, PC-14, PC-23). The chain is Geranylgeranyl pyrophosphate synthase penG from Penicillium crustosum (Blue mold fungus).